We begin with the raw amino-acid sequence, 418 residues long: Histidinol dehydrogenase (418 aa).

Tyr119, Gln180, and Asn203 together coordinate NAD(+). Substrate contacts are provided by Thr226, Gln248, and His251. Residues Gln248 and His251 each coordinate Zn(2+). Catalysis depends on proton acceptor residues Glu316 and His317. Substrate contacts are provided by His317, Asp350, Glu404, and His409. Asp350 is a Zn(2+) binding site. Residue His409 coordinates Zn(2+).

This sequence belongs to the histidinol dehydrogenase family. It depends on Zn(2+) as a cofactor.

The catalysed reaction is L-histidinol + 2 NAD(+) + H2O = L-histidine + 2 NADH + 3 H(+). It functions in the pathway amino-acid biosynthesis; L-histidine biosynthesis; L-histidine from 5-phospho-alpha-D-ribose 1-diphosphate: step 9/9. In terms of biological role, catalyzes the sequential NAD-dependent oxidations of L-histidinol to L-histidinaldehyde and then to L-histidine. This chain is Histidinol dehydrogenase, found in Staphylococcus aureus (strain MSSA476).